Here is a 202-residue protein sequence, read N- to C-terminus: Segregation and condensation protein B (202 aa).

The protein belongs to the ScpB family. Homodimer. Homodimerization may be required to stabilize the binding of ScpA to the Smc head domains. Component of a cohesin-like complex composed of ScpA, ScpB and the Smc homodimer, in which ScpA and ScpB bind to the head domain of Smc. The presence of the three proteins is required for the association of the complex with DNA.

It localises to the cytoplasm. In terms of biological role, participates in chromosomal partition during cell division. May act via the formation of a condensin-like complex containing Smc and ScpA that pull DNA away from mid-cell into both cell halves. The sequence is that of Segregation and condensation protein B from Clostridium acetobutylicum (strain ATCC 824 / DSM 792 / JCM 1419 / IAM 19013 / LMG 5710 / NBRC 13948 / NRRL B-527 / VKM B-1787 / 2291 / W).